The following is a 388-amino-acid chain: Succinate--CoA ligase [ADP-forming] subunit beta (388 aa).

An ATP-grasp domain is found at Lys-9 to Lys-245. ATP contacts are provided by residues Lys-46, Gly-53–Gly-55, Glu-100, Tyr-103, and Glu-108. The Mg(2+) site is built by Asn-200 and Asp-214. Substrate-binding positions include Asn-265 and Gly-322–Val-324.

The protein belongs to the succinate/malate CoA ligase beta subunit family. Heterotetramer of two alpha and two beta subunits. The cofactor is Mg(2+).

It carries out the reaction succinate + ATP + CoA = succinyl-CoA + ADP + phosphate. The catalysed reaction is GTP + succinate + CoA = succinyl-CoA + GDP + phosphate. The protein operates within carbohydrate metabolism; tricarboxylic acid cycle; succinate from succinyl-CoA (ligase route): step 1/1. Its function is as follows. Succinyl-CoA synthetase functions in the citric acid cycle (TCA), coupling the hydrolysis of succinyl-CoA to the synthesis of either ATP or GTP and thus represents the only step of substrate-level phosphorylation in the TCA. The beta subunit provides nucleotide specificity of the enzyme and binds the substrate succinate, while the binding sites for coenzyme A and phosphate are found in the alpha subunit. The sequence is that of Succinate--CoA ligase [ADP-forming] subunit beta from Acinetobacter baumannii (strain AB307-0294).